Reading from the N-terminus, the 1286-residue chain is ABC transporter B family member 1 (1286 aa).

2 helical membrane-spanning segments follow: residues 42 to 62 and 93 to 113; these read VLMG…PLFL and FLVV…CWMW. The region spanning 44–333 is the ABC transmembrane type-1 1 domain; it reads MGIGSVGAFV…SAPSMAAFAK (290 aa). Asp-139 lines the ATP pocket. 2 consecutive transmembrane segments (helical) span residues 166–186 and 187–207; these read LGNF…GFTA and VWQL…IGGI. An N-linked (GlcNAc...) asparagine glycan is attached at Asn-217. 2 consecutive transmembrane segments (helical) span residues 277–297 and 301–321; these read ATYF…GYLV and LTNG…GLAL. Tyr-286 provides a ligand contact to brassinolide. The region spanning 368-604 is the ABC transporter 1 domain; that stretch reads VELKNVDFSY…GENGVYAKLI (237 aa). Tyr-377, Ser-379, Arg-380, Gly-408, Lys-409, Ser-410, and Thr-411 together coordinate ATP. Residues 614 to 647 form a disordered region; the sequence is AMSNARKSSARPSSARNSVSSPIMTRNSSYGRSP. Positions 616–635 are enriched in low complexity; the sequence is SNARKSSARPSSARNSVSSP. N-linked (GlcNAc...) asparagine glycosylation occurs at Asn-640. The region spanning 700 to 988 is the ABC transmembrane type-1 2 domain; the sequence is ALLGSVGSVI…TLTLAPDFIK (289 aa). Transmembrane regions (helical) follow at residues 705–725 and 745–765; these read VGSV…SAVL and YLLI…HSFW. Asn-771 is a glycosylation site (N-linked (GlcNAc...) asparagine). Asp-793 contributes to the ATP binding site. Asn-797 carries N-linked (GlcNAc...) asparagine glycosylation. A run of 4 helical transmembrane segments spans residues 821–843, 845–867, 932–952, and 967–987; these read ISVI…VLQW, LALV…KMFM, VAQF…SWLV, and MVLM…PDFI. 2 residues coordinate brassinolide: Tyr-941 and Glu-978. The ABC transporter 2 domain occupies 1024–1260; that stretch reads VELKHIDFSY…HPDGIYARMI (237 aa). The ATP site is built by Tyr-1033, Arg-1036, Gly-1064, Lys-1065, and Ser-1066. Positions 1049 to 1286 are interaction with FKBP42/TWD1; sequence ARAGKTLALV…SSSRVKEDDA (238 aa).

The protein belongs to the ABC transporter superfamily. ABCB family. Multidrug resistance exporter (TC 3.A.1.201) subfamily. As to quaternary structure, interacts with 1-naphthylphthalamic acid (NPA) and FKBP42/TWD1. Ubiquitous, with high levels in peduncles. Mostly localized in young developing tissues, including meristems, as well as root and shoot apices.

Its subcellular location is the cell membrane. It catalyses the reaction (indol-3-yl)acetate(in) + ATP + H2O = (indol-3-yl)acetate(out) + ADP + phosphate + H(+). The enzyme catalyses brassinolide(in) + ATP + H2O = brassinolide(out) + ADP + phosphate + H(+). It carries out the reaction 24-epi-brassinolide(in) + ATP + H2O = 24-epi-brassinolide(out) + ADP + phosphate + H(+). The catalysed reaction is 24-epi-castasterone(in) + ATP + H2O = 24-epi-castasterone(out) + ADP + phosphate + H(+). It catalyses the reaction castasterone(in) + ATP + H2O = castasterone(out) + ADP + phosphate + H(+). Transport capacity is stimulated by the chaperone protein FKBP42/TWD1. Transport activity inhibited by 1-N-naphthylphthalamic acid (NPA), cyclopropyl propane dione (CPD), cyclosporin A, verapamil and quercetin. ATPase activity is specifically activated by bioactive brassinosteroids in a dose-dependent manner, including brassinolide (BL), 24-epiBL, 24-epicastasterone (24-epiCS) and castasterone-alkyne; BL binding leads to structural changes. Inhibited by vanadate. Functionally, brassinosteroid exporter that, in conjunction with ABCB19, supports the accumulation of exogenous brassinosteroids (BR) in the apoplast, thus promoting BR signaling initiation involving the specific receptor BRI1 and required for plant growth and stress responses. Auxin efflux transporter that acts as a negative regulator of light signaling to promote hypocotyl elongation. May contribute to the regulation of leaf position and morphology during PHOT1-mediated blue light responses involving auxin distribution, especially in low light fluence. Together with ABCB19 and in a FKBP42/TWD1-dependent manner, supports seed development by promoting stamen elongation and, to a lesser extent, anther dehiscence and pollen maturation, probably as auxin transporters. Mediates the accumulation of chlorophyll and anthocyanin, as well as the expression of genes in response to light. Participates directly in auxin efflux and thus regulates the polar (presumably basipetal) auxin transport (from root tips to root elongating zone). Also transports some auxin metabolites such as oxindoleacetic acid and indoleacetaldehyde. Involved in diverse auxin-mediated responses including gravitropism, phototropism and lateral root formation. Confers resistance to herbicides such as dicamba, pendimethalin, oryzalin, and monosodium acid methanearsonate (MSMA), but not to herbicides such as glyphosate, atrazine, bentazon and fluazifop-p-butyl. Also mediates resistance to xenobiotics such as cycloheximide and the cytokinin N6-(2-isopentenyl)adenine (2IP). This is ABC transporter B family member 1 from Arabidopsis thaliana (Mouse-ear cress).